Here is a 292-residue protein sequence, read N- to C-terminus: 4-hydroxy-tetrahydrodipicolinate synthase (292 aa).

T45 lines the pyruvate pocket. The active-site Proton donor/acceptor is Y133. The active-site Schiff-base intermediate with substrate is K161. A pyruvate-binding site is contributed by I203.

Belongs to the DapA family. In terms of assembly, homotetramer; dimer of dimers.

It localises to the cytoplasm. The enzyme catalyses L-aspartate 4-semialdehyde + pyruvate = (2S,4S)-4-hydroxy-2,3,4,5-tetrahydrodipicolinate + H2O + H(+). Its pathway is amino-acid biosynthesis; L-lysine biosynthesis via DAP pathway; (S)-tetrahydrodipicolinate from L-aspartate: step 3/4. Functionally, catalyzes the condensation of (S)-aspartate-beta-semialdehyde [(S)-ASA] and pyruvate to 4-hydroxy-tetrahydrodipicolinate (HTPA). The chain is 4-hydroxy-tetrahydrodipicolinate synthase from Acidiphilium cryptum (strain JF-5).